We begin with the raw amino-acid sequence, 344 residues long: Phenylalanine--tRNA ligase alpha subunit (344 aa).

Position 255 (glutamate 255) interacts with Mg(2+).

It belongs to the class-II aminoacyl-tRNA synthetase family. Phe-tRNA synthetase alpha subunit type 1 subfamily. As to quaternary structure, tetramer of two alpha and two beta subunits. The cofactor is Mg(2+).

It localises to the cytoplasm. The enzyme catalyses tRNA(Phe) + L-phenylalanine + ATP = L-phenylalanyl-tRNA(Phe) + AMP + diphosphate + H(+). The protein is Phenylalanine--tRNA ligase alpha subunit of Sulfurihydrogenibium sp. (strain YO3AOP1).